The sequence spans 1296 residues: DNA-directed RNA polymerase subunit beta' (1296 aa).

4 residues coordinate Zn(2+): cysteine 60, cysteine 62, cysteine 75, and cysteine 78. Basic and acidic residues predominate over residues 185-202 (EEEGGKAAEKRKLRDSAD). Positions 185–204 (EEEGGKAAEKRKLRDSADRQ) are disordered. Positions 535, 537, and 539 each coordinate Mg(2+). Zn(2+) contacts are provided by cysteine 877, cysteine 954, cysteine 961, and cysteine 964.

This sequence belongs to the RNA polymerase beta' chain family. In terms of assembly, the RNAP catalytic core consists of 2 alpha, 1 beta, 1 beta' and 1 omega subunit. When a sigma factor is associated with the core the holoenzyme is formed, which can initiate transcription. The cofactor is Mg(2+). It depends on Zn(2+) as a cofactor.

It carries out the reaction RNA(n) + a ribonucleoside 5'-triphosphate = RNA(n+1) + diphosphate. DNA-dependent RNA polymerase catalyzes the transcription of DNA into RNA using the four ribonucleoside triphosphates as substrates. This is DNA-directed RNA polymerase subunit beta' from Kocuria rhizophila (strain ATCC 9341 / DSM 348 / NBRC 103217 / DC2201).